A 371-amino-acid polypeptide reads, in one-letter code: Putative 26S proteasome regulatory subunit homolog MJ1494 (371 aa).

161-168 (GPPGTGKT) lines the ATP pocket.

The protein belongs to the AAA ATPase family.

In terms of biological role, the 26S proteasome is involved in the ATP-dependent degradation of ubiquitinated proteins. The regulatory (or ATPase) complex confers ATP dependency and substrate specificity to the 26S complex. The polypeptide is Putative 26S proteasome regulatory subunit homolog MJ1494 (Methanocaldococcus jannaschii (strain ATCC 43067 / DSM 2661 / JAL-1 / JCM 10045 / NBRC 100440) (Methanococcus jannaschii)).